A 221-amino-acid chain; its full sequence is Iron-sulfur cluster assembly SufBD family protein ycf24 (221 aa).

The protein belongs to the iron-sulfur cluster assembly SufBD family.

It localises to the plastid. It is found in the chloroplast. The protein is Iron-sulfur cluster assembly SufBD family protein ycf24 (ycf24) of Galdieria sulphuraria (Red alga).